Here is a 331-residue protein sequence, read N- to C-terminus: Cytosolic sulfotransferase 8 (331 aa).

Over residues 1 to 11 (MGEKDIPRNLK) the composition is skewed to basic and acidic residues. Residues 1–31 (MGEKDIPRNLKEEEEEEEENQSEETKSLISS) form a disordered region. The segment covering 12–22 (EEEEEEEENQS) has biased composition (acidic residues). 80-85 (KSGTTW) contacts 3'-phosphoadenylyl sulfate. The active-site Proton acceptor is the H145. 3'-phosphoadenylyl sulfate is bound by residues R167, S175, Y231, and 297-299 (RKG).

The protein belongs to the sulfotransferase 1 family. Expressed in seedlings and roots.

Its subcellular location is the cytoplasm. Sulfotransferase that utilizes 3'-phospho-5'-adenylyl sulfate (PAPS) as sulfonate donor. No activity with brassinosteroids. In Arabidopsis thaliana (Mouse-ear cress), this protein is Cytosolic sulfotransferase 8 (SOT8).